A 337-amino-acid polypeptide reads, in one-letter code: Adenylosuccinate synthetase (337 aa).

GTP is bound by residues 12–18 (GDEGKGK) and 42–44 (GHT). Asp-13 (proton acceptor) is an active-site residue. 2 residues coordinate Mg(2+): Asp-13 and Gly-42. IMP-binding positions include 13 to 16 (DEGK), 40 to 43 (NAGH), Thr-127, Arg-141, Gln-179, Thr-194, and Arg-256. His-43 serves as the catalytic Proton donor. A substrate-binding site is contributed by 252-258 (TVTGRRR). GTP is bound by residues Arg-258, 284-286 (CLD), and 324-326 (STG).

Belongs to the adenylosuccinate synthetase family. As to quaternary structure, homodimer. The cofactor is Mg(2+).

The protein localises to the cytoplasm. The catalysed reaction is IMP + L-aspartate + GTP = N(6)-(1,2-dicarboxyethyl)-AMP + GDP + phosphate + 2 H(+). It functions in the pathway purine metabolism; AMP biosynthesis via de novo pathway; AMP from IMP: step 1/2. In terms of biological role, plays an important role in the de novo pathway of purine nucleotide biosynthesis. Catalyzes the first committed step in the biosynthesis of AMP from IMP. The polypeptide is Adenylosuccinate synthetase (Methanococcus maripaludis (strain C5 / ATCC BAA-1333)).